A 1058-amino-acid chain; its full sequence is Carbamoyl phosphate synthase large chain (1058 aa).

Residues 1–401 (MPKRKDIKTI…SLLKAIRSLE (401 aa)) form a carboxyphosphate synthetic domain region. Positions 129, 169, 175, 176, 208, 210, 215, 241, 242, 243, 284, and 298 each coordinate ATP. One can recognise an ATP-grasp 1 domain in the interval 133–327 (RDLMNELNEP…IAKIAAKIAV (195 aa)). 3 residues coordinate Mg(2+): glutamine 284, glutamate 298, and asparagine 300. 3 residues coordinate Mn(2+): glutamine 284, glutamate 298, and asparagine 300. Positions 402–546 (YGVHHLGLPN…YSTYEFENES (145 aa)) are oligomerization domain. The interval 547-929 (TRSDKEKIVV…ALYKGLTAAG (383 aa)) is carbamoyl phosphate synthetic domain. The ATP-grasp 2 domain maps to 671–861 (EKLLIGLKIP…VANIAMQCIL (191 aa)). ATP is bound by residues arginine 707, arginine 746, leucine 748, glutamate 752, glycine 777, valine 778, histidine 779, serine 780, glutamine 820, and glutamate 832. Residues glutamine 820, glutamate 832, and asparagine 834 each contribute to the Mg(2+) site. Glutamine 820, glutamate 832, and asparagine 834 together coordinate Mn(2+). One can recognise an MGS-like domain in the interval 930-1058 (IKIKDYGRVL…ESMSFRVQTL (129 aa)). The allosteric domain stretch occupies residues 930 to 1058 (IKIKDYGRVL…ESMSFRVQTL (129 aa)).

It belongs to the CarB family. As to quaternary structure, composed of two chains; the small (or glutamine) chain promotes the hydrolysis of glutamine to ammonia, which is used by the large (or ammonia) chain to synthesize carbamoyl phosphate. Tetramer of heterodimers (alpha,beta)4. Mg(2+) serves as cofactor. It depends on Mn(2+) as a cofactor.

The enzyme catalyses hydrogencarbonate + L-glutamine + 2 ATP + H2O = carbamoyl phosphate + L-glutamate + 2 ADP + phosphate + 2 H(+). It catalyses the reaction hydrogencarbonate + NH4(+) + 2 ATP = carbamoyl phosphate + 2 ADP + phosphate + 2 H(+). Its pathway is amino-acid biosynthesis; L-arginine biosynthesis; carbamoyl phosphate from bicarbonate: step 1/1. The protein operates within pyrimidine metabolism; UMP biosynthesis via de novo pathway; (S)-dihydroorotate from bicarbonate: step 1/3. In terms of biological role, large subunit of the glutamine-dependent carbamoyl phosphate synthetase (CPSase). CPSase catalyzes the formation of carbamoyl phosphate from the ammonia moiety of glutamine, carbonate, and phosphate donated by ATP, constituting the first step of 2 biosynthetic pathways, one leading to arginine and/or urea and the other to pyrimidine nucleotides. The large subunit (synthetase) binds the substrates ammonia (free or transferred from glutamine from the small subunit), hydrogencarbonate and ATP and carries out an ATP-coupled ligase reaction, activating hydrogencarbonate by forming carboxy phosphate which reacts with ammonia to form carbamoyl phosphate. The sequence is that of Carbamoyl phosphate synthase large chain from Fusobacterium nucleatum subsp. nucleatum (strain ATCC 25586 / DSM 15643 / BCRC 10681 / CIP 101130 / JCM 8532 / KCTC 2640 / LMG 13131 / VPI 4355).